The chain runs to 990 residues: DNA ligase 4 (990 aa).

The tract at residues 57 to 84 (TQKKGRQPPGPRRKAGPHGHSNLSPHEA) is disordered. Residues glutamate 324, lysine 326, leucine 327, arginine 331, glutamate 394, phenylalanine 436, glutamate 496, lysine 501, lysine 518, and lysine 520 each coordinate ATP. Lysine 326 functions as the N6-AMP-lysine intermediate in the catalytic mechanism. Glutamate 394 is a binding site for Mg(2+). Residue glutamate 496 coordinates Mg(2+). 2 consecutive BRCT domains span residues 728–821 (PQSK…LPYL) and 900–989 (YMFS…RYQW).

Belongs to the ATP-dependent DNA ligase family. It depends on Mg(2+) as a cofactor.

It localises to the nucleus. The enzyme catalyses ATP + (deoxyribonucleotide)n-3'-hydroxyl + 5'-phospho-(deoxyribonucleotide)m = (deoxyribonucleotide)n+m + AMP + diphosphate.. In terms of biological role, DNA ligase involved in DNA non-homologous end joining (NHEJ); required for double-strand break (DSB) repair. The chain is DNA ligase 4 (LIG4) from Phaeosphaeria nodorum (strain SN15 / ATCC MYA-4574 / FGSC 10173) (Glume blotch fungus).